A 493-amino-acid chain; its full sequence is NADH-quinone oxidoreductase subunit N 2 (493 aa).

14 helical membrane-spanning segments follow: residues 16–36 (IIPA…DFLI), 45–65 (FLLI…FRQQ), 87–107 (GFAI…AIVS), 119–139 (GEYY…ATGT), 141–161 (LITL…MVGF), 176–196 (LLLG…MYGI), 219–239 (VFLA…AVPF), 258–278 (LSVA…LGPL), 285–305 (WEPL…LAAI), 313–333 (LLAY…VAGN), 340–360 (IAVY…VIIA), 385–405 (AFLM…AGFL), 421–441 (GLAI…FKIV), and 464–484 (CALA…EPFL).

This sequence belongs to the complex I subunit 2 family. NDH-1 is composed of 14 different subunits. Subunits NuoA, H, J, K, L, M, N constitute the membrane sector of the complex.

Its subcellular location is the cell inner membrane. The enzyme catalyses a quinone + NADH + 5 H(+)(in) = a quinol + NAD(+) + 4 H(+)(out). In terms of biological role, NDH-1 shuttles electrons from NADH, via FMN and iron-sulfur (Fe-S) centers, to quinones in the respiratory chain. The immediate electron acceptor for the enzyme in this species is believed to be ubiquinone. Couples the redox reaction to proton translocation (for every two electrons transferred, four hydrogen ions are translocated across the cytoplasmic membrane), and thus conserves the redox energy in a proton gradient. This is NADH-quinone oxidoreductase subunit N 2 from Solibacter usitatus (strain Ellin6076).